Reading from the N-terminus, the 99-residue chain is Large ribosomal subunit protein uL23 (99 aa).

This sequence belongs to the universal ribosomal protein uL23 family. In terms of assembly, part of the 50S ribosomal subunit. Contacts protein L29, and trigger factor when it is bound to the ribosome.

Its function is as follows. One of the early assembly proteins it binds 23S rRNA. One of the proteins that surrounds the polypeptide exit tunnel on the outside of the ribosome. Forms the main docking site for trigger factor binding to the ribosome. The chain is Large ribosomal subunit protein uL23 from Xanthomonas campestris pv. campestris (strain B100).